We begin with the raw amino-acid sequence, 445 residues long: Selenocysteine lyase (445 aa).

An N-acetylmethionine modification is found at M1. The segment at 1 to 28 is disordered; that stretch reads MEAAVAPGRDAPAPAASQPSGCGKHNSP. Phosphoserine is present on S129. K259 is subject to N6-(pyridoxal phosphate)lysine. C388 functions as the S-selanylcysteine intermediate in the catalytic mechanism.

This sequence belongs to the class-V pyridoxal-phosphate-dependent aminotransferase family. In terms of assembly, homodimer. Pyridoxal 5'-phosphate is required as a cofactor.

The protein resides in the cytoplasm. Its subcellular location is the cytosol. It catalyses the reaction L-selenocysteine + AH2 = hydrogenselenide + L-alanine + A + H(+). Its function is as follows. Catalyzes the decomposition of L-selenocysteine to L-alanine and elemental selenium. The sequence is that of Selenocysteine lyase (SCLY) from Homo sapiens (Human).